The following is a 600-amino-acid chain: Proline--tRNA ligase (600 aa).

The protein belongs to the class-II aminoacyl-tRNA synthetase family. ProS type 1 subfamily. As to quaternary structure, homodimer.

Its subcellular location is the cytoplasm. The enzyme catalyses tRNA(Pro) + L-proline + ATP = L-prolyl-tRNA(Pro) + AMP + diphosphate. Functionally, catalyzes the attachment of proline to tRNA(Pro) in a two-step reaction: proline is first activated by ATP to form Pro-AMP and then transferred to the acceptor end of tRNA(Pro). As ProRS can inadvertently accommodate and process non-cognate amino acids such as alanine and cysteine, to avoid such errors it has two additional distinct editing activities against alanine. One activity is designated as 'pretransfer' editing and involves the tRNA(Pro)-independent hydrolysis of activated Ala-AMP. The other activity is designated 'posttransfer' editing and involves deacylation of mischarged Ala-tRNA(Pro). The misacylated Cys-tRNA(Pro) is not edited by ProRS. This Synechococcus elongatus (strain ATCC 33912 / PCC 7942 / FACHB-805) (Anacystis nidulans R2) protein is Proline--tRNA ligase.